Reading from the N-terminus, the 252-residue chain is 5-oxoprolinase subunit A 1 (252 aa).

This sequence belongs to the LamB/PxpA family. As to quaternary structure, forms a complex composed of PxpA, PxpB and PxpC.

It catalyses the reaction 5-oxo-L-proline + ATP + 2 H2O = L-glutamate + ADP + phosphate + H(+). Catalyzes the cleavage of 5-oxoproline to form L-glutamate coupled to the hydrolysis of ATP to ADP and inorganic phosphate. The protein is 5-oxoprolinase subunit A 1 of Bordetella bronchiseptica (strain ATCC BAA-588 / NCTC 13252 / RB50) (Alcaligenes bronchisepticus).